The chain runs to 223 residues: Ribonuclease 3 (223 aa).

The 123-residue stretch at 3–125 (LERLQKKLSY…IIAAIYLDAG (123 aa)) folds into the RNase III domain. A Mg(2+)-binding site is contributed by Glu-38. The active site involves Asp-42. 2 residues coordinate Mg(2+): Asp-111 and Glu-114. Glu-114 is a catalytic residue. One can recognise a DRBM domain in the interval 152–222 (DPKTRLQEFL…AEQVLAKLTT (71 aa)).

Belongs to the ribonuclease III family. In terms of assembly, homodimer. Mg(2+) serves as cofactor.

It localises to the cytoplasm. It carries out the reaction Endonucleolytic cleavage to 5'-phosphomonoester.. Functionally, digests double-stranded RNA. Involved in the processing of primary rRNA transcript to yield the immediate precursors to the large and small rRNAs (23S and 16S). Processes some mRNAs, and tRNAs when they are encoded in the rRNA operon. Processes pre-crRNA and tracrRNA of type II CRISPR loci if present in the organism. In Actinobacillus pleuropneumoniae serotype 5b (strain L20), this protein is Ribonuclease 3.